A 257-amino-acid chain; its full sequence is 1-(5-phosphoribosyl)-5-[(5-phosphoribosylamino)methylideneamino] imidazole-4-carboxamide isomerase (257 aa).

D8 functions as the Proton acceptor in the catalytic mechanism. The Proton donor role is filled by D129.

It belongs to the HisA/HisF family.

It localises to the cytoplasm. The enzyme catalyses 1-(5-phospho-beta-D-ribosyl)-5-[(5-phospho-beta-D-ribosylamino)methylideneamino]imidazole-4-carboxamide = 5-[(5-phospho-1-deoxy-D-ribulos-1-ylimino)methylamino]-1-(5-phospho-beta-D-ribosyl)imidazole-4-carboxamide. Its pathway is amino-acid biosynthesis; L-histidine biosynthesis; L-histidine from 5-phospho-alpha-D-ribose 1-diphosphate: step 4/9. The polypeptide is 1-(5-phosphoribosyl)-5-[(5-phosphoribosylamino)methylideneamino] imidazole-4-carboxamide isomerase (Trichormus variabilis (strain ATCC 29413 / PCC 7937) (Anabaena variabilis)).